We begin with the raw amino-acid sequence, 409 residues long: Alpha-1-antitrypsin (409 aa).

A signal peptide spans 1–15 (LLLAGLCCLLPGSLA). Residues 18 to 39 (PQGDAAQKTDTPPHDQNHPTLN) form a disordered region. 4 N-linked (GlcNAc...) asparagine glycosylation sites follow: N61, N98, N136, and N262. Positions 364–383 (GAMFLEAIPMSIPPEVKFNK) are RCL. The residue at position 374 (S374) is a Phosphoserine.

It belongs to the serpin family. In terms of assembly, interacts with CELA2A. Interacts with ERGIC3 and LMAN1/ERGIC53. Interacts with PRSS1/Trypsin. As to expression, plasma.

The protein resides in the secreted. Inhibitor of serine proteases. Its primary target is elastase, but it also has a moderate affinity for plasmin and thrombin. Inhibits trypsin, chymotrypsin and plasminogen activator. This chain is Alpha-1-antitrypsin (SERPINA1), found in Papio anubis (Olive baboon).